Here is a 218-residue protein sequence, read N- to C-terminus: Recombination protein RecR (218 aa).

Residues C56 to C71 form a C4-type zinc finger. The 117-residue stretch at G79 to P195 folds into the Toprim domain.

Belongs to the RecR family.

May play a role in DNA repair. It seems to be involved in an RecBC-independent recombinational process of DNA repair. It may act with RecF and RecO. This Corynebacterium efficiens (strain DSM 44549 / YS-314 / AJ 12310 / JCM 11189 / NBRC 100395) protein is Recombination protein RecR.